The chain runs to 602 residues: Aspartate--tRNA(Asp/Asn) ligase (602 aa).

Glu176 is a binding site for L-aspartate. Positions 200–203 (QQFK) are aspartate. Arg222 and His452 together coordinate L-aspartate. 222–224 (RDE) is a binding site for ATP. ATP is bound at residue Glu490. Arg497 contacts L-aspartate. Residue 542–545 (GIDR) participates in ATP binding.

The protein belongs to the class-II aminoacyl-tRNA synthetase family. Type 1 subfamily. In terms of assembly, homodimer.

It is found in the cytoplasm. The enzyme catalyses tRNA(Asx) + L-aspartate + ATP = L-aspartyl-tRNA(Asx) + AMP + diphosphate. Aspartyl-tRNA synthetase with relaxed tRNA specificity since it is able to aspartylate not only its cognate tRNA(Asp) but also tRNA(Asn). Reaction proceeds in two steps: L-aspartate is first activated by ATP to form Asp-AMP and then transferred to the acceptor end of tRNA(Asp/Asn). The chain is Aspartate--tRNA(Asp/Asn) ligase from Rickettsia canadensis (strain McKiel).